Here is a 466-residue protein sequence, read N- to C-terminus: 3-isopropylmalate dehydratase large subunit (466 aa).

[4Fe-4S] cluster contacts are provided by Cys-347, Cys-407, and Cys-410.

This sequence belongs to the aconitase/IPM isomerase family. LeuC type 1 subfamily. As to quaternary structure, heterodimer of LeuC and LeuD. [4Fe-4S] cluster is required as a cofactor.

It catalyses the reaction (2R,3S)-3-isopropylmalate = (2S)-2-isopropylmalate. The protein operates within amino-acid biosynthesis; L-leucine biosynthesis; L-leucine from 3-methyl-2-oxobutanoate: step 2/4. Functionally, catalyzes the isomerization between 2-isopropylmalate and 3-isopropylmalate, via the formation of 2-isopropylmaleate. The chain is 3-isopropylmalate dehydratase large subunit from Shewanella halifaxensis (strain HAW-EB4).